Reading from the N-terminus, the 78-residue chain is Small ribosomal subunit protein bS16 (78 aa).

Belongs to the bacterial ribosomal protein bS16 family.

The protein is Small ribosomal subunit protein bS16 of Maridesulfovibrio salexigens (strain ATCC 14822 / DSM 2638 / NCIMB 8403 / VKM B-1763) (Desulfovibrio salexigens).